The sequence spans 541 residues: MAKTIAYDEEARRGLERGLNALADAVKVTLGPKGRNVVLEKKWGAPTITNDGVSIAKEIELEDPYEKIGAELVKEVAKKTDDVAGDGTTTATVLAQALVKEGLRNVAAGANPLGLKRGIEKAVEKVTETLLKSAKEVETKEQIAATAAISAGDQSIGDLIAEAMDKVGNEGVITVEESNTFGLQLELTEGMRFDKGYISGYFVTDAERQEAVLEDPYILLVSSKVSTVKDLLPLLEKVIQGGKPLLIIAEDVEGEALSTLVVNKIRGTFKSVAVKAPGFGDRRKAMLQDMAILTGGQVISEEVGLSLETADISLLGKARKVVITKDETTLVEGAGDSDAIAGRVAQIRAEIENSDSDYDREKLQERLAKLAGGVAVIKAGAATEVELKERKHRIEDAVRNAKAAVEEGIVAGGGVALLHAVPSLDELKLSGDEATGANIVRVALEAPLKQIAFNGGLEPGVVAEKVRNSPVGTGLNAATGVYEDLLKAGVADPVKVTRSALQNAASIAGLFLTTEAVVADKPEKAAAPAGDPTGGMGGMDF.

ATP contacts are provided by residues 29-32 (TLGP), 86-90 (DGTTT), glycine 413, 476-478 (NAA), and aspartate 492.

The protein belongs to the chaperonin (HSP60) family. Forms a cylinder of 14 subunits composed of two heptameric rings stacked back-to-back. Interacts with the co-chaperonin GroES.

It is found in the secreted. It localises to the capsule. The protein resides in the cell surface. The protein localises to the cell wall. The enzyme catalyses ATP + H2O + a folded polypeptide = ADP + phosphate + an unfolded polypeptide.. Together with its co-chaperonin GroES, plays an essential role in assisting protein folding. The GroEL-GroES system forms a nano-cage that allows encapsulation of the non-native substrate proteins and provides a physical environment optimized to promote and accelerate protein folding. In Mycobacterium ulcerans (strain Agy99), this protein is Chaperonin GroEL 2.